Consider the following 336-residue polypeptide: Casein kinase I isoform beta (336 aa).

The Protein kinase domain maps to 17–285 (YKLVREIGFG…YLRQLFRLLF (269 aa)). ATP-binding positions include 23–31 (IGFGSFGHV) and lysine 46. Aspartate 136 acts as the Proton acceptor in catalysis. Residues 309-320 (ASSSSGEGQQAQ) are compositionally biased toward low complexity. The disordered stretch occupies residues 309–336 (ASSSSGEGQQAQTPTGKSDNTKSEMKHS). Basic and acidic residues predominate over residues 327 to 336 (DNTKSEMKHS).

This sequence belongs to the protein kinase superfamily. CK1 Ser/Thr protein kinase family. Casein kinase I subfamily. Monomer.

Its subcellular location is the cytoplasm. The enzyme catalyses L-seryl-[protein] + ATP = O-phospho-L-seryl-[protein] + ADP + H(+). It carries out the reaction L-threonyl-[protein] + ATP = O-phospho-L-threonyl-[protein] + ADP + H(+). In terms of biological role, casein kinases are operationally defined by their preferential utilization of acidic proteins such as caseins as substrates. It can phosphorylate a large number of proteins. Participates in Wnt signaling. The protein is Casein kinase I isoform beta (CSNK1B) of Bos taurus (Bovine).